Here is a 340-residue protein sequence, read N- to C-terminus: Methionyl-tRNA formyltransferase (340 aa).

110–113 lines the (6S)-5,6,7,8-tetrahydrofolate pocket; the sequence is SLLP.

The protein belongs to the Fmt family.

The catalysed reaction is L-methionyl-tRNA(fMet) + (6R)-10-formyltetrahydrofolate = N-formyl-L-methionyl-tRNA(fMet) + (6S)-5,6,7,8-tetrahydrofolate + H(+). Attaches a formyl group to the free amino group of methionyl-tRNA(fMet). The formyl group appears to play a dual role in the initiator identity of N-formylmethionyl-tRNA by promoting its recognition by IF2 and preventing the misappropriation of this tRNA by the elongation apparatus. In Synechococcus sp. (strain WH7803), this protein is Methionyl-tRNA formyltransferase.